Consider the following 498-residue polypeptide: MDHNTDPPPTTMVDAAAALLLEPKLEGYDDDGGGEPLQPAPFVSPLDQLMQPPRPLEALLQGPQLPPFLSKTYDLVCEPELDGVISWGHAGNSFVVWDPSAFARDVLPHHFKHNNFSSFVRQLNTYGFRKVHADRWEFAHEDFLRHSKHLLKKIVRRRSSPTQQSGLQPGSSGESGLDPELNTLRREKSALLQEVTRLKQEHLQTIEQMSTLNQRLESAEDRQKQMVSFLAKLLQNPTFLRQLKMHRQQKEIDSTRVKRKFLKHVPHGNIDSGESSSQHTGESNLDFSPTSLDLPATHSDILDLQNFLLEDGDLNLAMLPENIGLDGIEAPDDIGALVQGFDTQEELELGSGVELLEIPPASGPRGQDPTIGRSKGKNVLSPGLDATSSEADCLGSFSDNMGMLSDSMLQTAGKLMDADDDERIWGVDASSALQSSCSGTSQQAYGSLVSDPYLMEMANKPEKFWELDFQALDDGDLQLDKCVIDDPALQQQRGNMNS.

The interval 156 to 180 (RRRSSPTQQSGLQPGSSGESGLDPE) is disordered. A compositionally biased stretch (polar residues) spans 160–174 (SPTQQSGLQPGSSGE). Residues 180–235 (ELNTLRREKSALLQEVTRLKQEHLQTIEQMSTLNQRLESAEDRQKQMVSFLAKLLQ) adopt a coiled-coil conformation. Residues 184–234 (LRREKSALLQEVTRLKQEHLQTIEQMSTLNQRLESAEDRQKQMVSFLAKLL) are hydrophobic repeat HR-A/B. The Nuclear localization signal signature appears at 258-263 (KRKFLK). A disordered region spans residues 263–291 (KHVPHGNIDSGESSSQHTGESNLDFSPTS). The segment covering 272–291 (SGESSSQHTGESNLDFSPTS) has biased composition (polar residues). A Nuclear export signal motif is present at residues 309-316 (LEDGDLNL). The disordered stretch occupies residues 356-382 (LEIPPASGPRGQDPTIGRSKGKNVLSP).

Belongs to the HSF family. Class A subfamily. Homotrimer. In terms of processing, exhibits temperature-dependent phosphorylation.

Its subcellular location is the cytoplasm. The protein resides in the nucleus. Transcriptional regulator that specifically binds DNA of heat shock promoter elements (HSE). This Oryza sativa subsp. japonica (Rice) protein is Heat stress transcription factor A-3 (HSFA3).